We begin with the raw amino-acid sequence, 249 residues long: Ciliogenesis and planar polarity effector 2 (249 aa).

The small GTPase-like stretch occupies residues P46–E249. Residues G58–T65 and T171–D174 contribute to the GTP site.

Belongs to the small GTPase superfamily. Rab family. As to quaternary structure, interacts with fuz.

It is found in the cytoplasm. The protein localises to the cytoskeleton. It localises to the cilium basal body. In terms of biological role, potential effector of the planar cell polarity signaling pathway. Plays a role in targeted membrane trafficking most probably at the level of vesicle fusion with membranes. Involved in cilium biogenesis by regulating the transport of cargo proteins to the basal body and to the apical tips of cilia. More generally involved in exocytosis in secretory cells. The chain is Ciliogenesis and planar polarity effector 2 from Xenopus laevis (African clawed frog).